We begin with the raw amino-acid sequence, 347 residues long: NADH-ubiquinone oxidoreductase chain 2 (347 aa).

10 helical membrane-spanning segments follow: residues 1 to 21, 25 to 45, 59 to 79, 96 to 116, 122 to 142, 148 to 168, 200 to 220, 240 to 260, 274 to 294, and 325 to 345; these read MNPL…GIVM, HWLT…PILM, YFLT…INLV, IILT…FWVP, VHLP…MSVL, MINL…GGWG, MALL…LTFM, ITTI…LSGF, NSII…FFYM, and LLSP…MLML.

This sequence belongs to the complex I subunit 2 family. Core subunit of respiratory chain NADH dehydrogenase (Complex I) which is composed of 45 different subunits. Interacts with TMEM242.

Its subcellular location is the mitochondrion inner membrane. The catalysed reaction is a ubiquinone + NADH + 5 H(+)(in) = a ubiquinol + NAD(+) + 4 H(+)(out). Core subunit of the mitochondrial membrane respiratory chain NADH dehydrogenase (Complex I) which catalyzes electron transfer from NADH through the respiratory chain, using ubiquinone as an electron acceptor. Essential for the catalytic activity and assembly of complex I. This Thoopterus nigrescens (Swift fruit bat) protein is NADH-ubiquinone oxidoreductase chain 2.